Reading from the N-terminus, the 107-residue chain is Ferredoxin 1 (107 aa).

2 4Fe-4S ferredoxin-type domains span residues 2–30 (TFVV…YEGP) and 31–60 (NFLV…SEDE). [3Fe-4S] cluster-binding residues include Cys9 and Cys17. 4 residues coordinate [4Fe-4S] cluster: Cys21, Cys40, Cys43, and Cys46. Cys50 contacts [3Fe-4S] cluster.

Requires [4Fe-4S] cluster as cofactor. The cofactor is [3Fe-4S] cluster.

In terms of biological role, ferredoxins are iron-sulfur proteins that transfer electrons in a wide variety of metabolic reactions. The polypeptide is Ferredoxin 1 (Stutzerimonas stutzeri (Pseudomonas stutzeri)).